Reading from the N-terminus, the 324-residue chain is Adenine deaminase (324 aa).

Positions 11, 13, and 189 each coordinate Zn(2+). Catalysis depends on Glu-192, which acts as the Proton donor. Asp-270 lines the Zn(2+) pocket. Asp-271 is a substrate binding site.

It belongs to the metallo-dependent hydrolases superfamily. Adenosine and AMP deaminases family. Adenine deaminase type 2 subfamily. It depends on Zn(2+) as a cofactor.

It catalyses the reaction adenine + H2O + H(+) = hypoxanthine + NH4(+). Functionally, catalyzes the hydrolytic deamination of adenine to hypoxanthine. Plays an important role in the purine salvage pathway and in nitrogen catabolism. The protein is Adenine deaminase of Rhizobium meliloti (strain 1021) (Ensifer meliloti).